A 533-amino-acid polypeptide reads, in one-letter code: Probable metalloreductase AIM14 (533 aa).

Helical transmembrane passes span 17 to 37 (IPYG…LIGA), 61 to 81 (GGSP…PFVH), 102 to 122 (VLAT…PGYV), 136 to 156 (SLCL…ALDS), 168 to 188 (IPNL…LLSV), 198 to 218 (SFYL…AYHA), and 220 to 240 (PGVF…YILS). The Ferric oxidoreductase domain occupies 96 to 213 (LGRLSYVLAT…IIGAWVFVFL (118 aa)). Residues 240-366 (SKTVPARGVE…GGSGLSYALP (127 aa)) enclose the FAD-binding FR-type domain.

It belongs to the ferric reductase (FRE) family. AIM14 subfamily.

The protein resides in the membrane. Probable cell surface metalloreductase. May be involved in iron or copper homeostasis. The sequence is that of Probable metalloreductase AIM14 (AIM14) from Lachancea thermotolerans (strain ATCC 56472 / CBS 6340 / NRRL Y-8284) (Yeast).